Consider the following 442-residue polypeptide: Proline--tRNA ligase (442 aa).

It belongs to the class-II aminoacyl-tRNA synthetase family. ProS type 2 subfamily. In terms of assembly, homodimer.

It localises to the cytoplasm. The catalysed reaction is tRNA(Pro) + L-proline + ATP = L-prolyl-tRNA(Pro) + AMP + diphosphate. Functionally, catalyzes the attachment of proline to tRNA(Pro) in a two-step reaction: proline is first activated by ATP to form Pro-AMP and then transferred to the acceptor end of tRNA(Pro). The polypeptide is Proline--tRNA ligase (Brucella canis (strain ATCC 23365 / NCTC 10854 / RM-666)).